Here is a 79-residue protein sequence, read N- to C-terminus: Translational regulator CsrA (79 aa).

This sequence belongs to the CsrA/RsmA family. As to quaternary structure, homodimer; the beta-strands of each monomer intercalate to form a hydrophobic core, while the alpha-helices form wings that extend away from the core.

The protein resides in the cytoplasm. A translational regulator that binds mRNA to regulate translation initiation and/or mRNA stability. Usually binds in the 5'-UTR at or near the Shine-Dalgarno sequence preventing ribosome-binding, thus repressing translation. Its main target seems to be the major flagellin gene, while its function is anatagonized by FliW. The sequence is that of Translational regulator CsrA from Helicobacter hepaticus (strain ATCC 51449 / 3B1).